Consider the following 138-residue polypeptide: Transcription antitermination protein NusB (138 aa).

Belongs to the NusB family.

Involved in transcription antitermination. Required for transcription of ribosomal RNA (rRNA) genes. Binds specifically to the boxA antiterminator sequence of the ribosomal RNA (rrn) operons. This is Transcription antitermination protein NusB from Photorhabdus laumondii subsp. laumondii (strain DSM 15139 / CIP 105565 / TT01) (Photorhabdus luminescens subsp. laumondii).